Consider the following 184-residue polypeptide: Adenine phosphoribosyltransferase (184 aa).

It belongs to the purine/pyrimidine phosphoribosyltransferase family. As to quaternary structure, homodimer.

It is found in the cytoplasm. The catalysed reaction is AMP + diphosphate = 5-phospho-alpha-D-ribose 1-diphosphate + adenine. It participates in purine metabolism; AMP biosynthesis via salvage pathway; AMP from adenine: step 1/1. Catalyzes a salvage reaction resulting in the formation of AMP, that is energically less costly than de novo synthesis. The protein is Adenine phosphoribosyltransferase of Sphingopyxis alaskensis (strain DSM 13593 / LMG 18877 / RB2256) (Sphingomonas alaskensis).